The primary structure comprises 274 residues: Dermonecrotic toxin SdSicTox-betaIIB1bxii (274 aa).

Histidine 5 is an active-site residue. Mg(2+) is bound by residues glutamate 25 and aspartate 27. Residue histidine 41 is the Nucleophile of the active site. Cystine bridges form between cysteine 45–cysteine 51 and cysteine 47–cysteine 190. Aspartate 85 is a binding site for Mg(2+).

It belongs to the arthropod phospholipase D family. Class II subfamily. The cofactor is Mg(2+). As to expression, expressed by the venom gland.

It is found in the secreted. It catalyses the reaction an N-(acyl)-sphingosylphosphocholine = an N-(acyl)-sphingosyl-1,3-cyclic phosphate + choline. It carries out the reaction an N-(acyl)-sphingosylphosphoethanolamine = an N-(acyl)-sphingosyl-1,3-cyclic phosphate + ethanolamine. The catalysed reaction is a 1-acyl-sn-glycero-3-phosphocholine = a 1-acyl-sn-glycero-2,3-cyclic phosphate + choline. The enzyme catalyses a 1-acyl-sn-glycero-3-phosphoethanolamine = a 1-acyl-sn-glycero-2,3-cyclic phosphate + ethanolamine. Its function is as follows. Dermonecrotic toxins cleave the phosphodiester linkage between the phosphate and headgroup of certain phospholipids (sphingolipid and lysolipid substrates), forming an alcohol (often choline) and a cyclic phosphate. This toxin acts on sphingomyelin (SM). It may also act on ceramide phosphoethanolamine (CPE), lysophosphatidylcholine (LPC) and lysophosphatidylethanolamine (LPE), but not on lysophosphatidylserine (LPS), and lysophosphatidylglycerol (LPG). It acts by transphosphatidylation, releasing exclusively cyclic phosphate products as second products. Induces dermonecrosis, hemolysis, increased vascular permeability, edema, inflammatory response, and platelet aggregation. This Sicarius cf. damarensis (strain GJB-2008) (Six-eyed sand spider) protein is Dermonecrotic toxin SdSicTox-betaIIB1bxii.